The following is a 297-amino-acid chain: Light-independent protochlorophyllide reductase iron-sulfur ATP-binding protein (297 aa).

ATP-binding positions include 41 to 46 (GIGKST) and K70. S45 contacts Mg(2+). C126 and C160 together coordinate [4Fe-4S] cluster. ATP-binding positions include 211–212 (NR) and 235–237 (PDL).

Belongs to the NifH/BchL/ChlL family. In terms of assembly, homodimer. Protochlorophyllide reductase is composed of three subunits; BchL, BchN and BchB. [4Fe-4S] cluster is required as a cofactor.

The catalysed reaction is chlorophyllide a + oxidized 2[4Fe-4S]-[ferredoxin] + 2 ADP + 2 phosphate = protochlorophyllide a + reduced 2[4Fe-4S]-[ferredoxin] + 2 ATP + 2 H2O. It participates in porphyrin-containing compound metabolism; bacteriochlorophyll biosynthesis (light-independent). Its function is as follows. Component of the dark-operative protochlorophyllide reductase (DPOR) that uses Mg-ATP and reduced ferredoxin to reduce ring D of protochlorophyllide (Pchlide) to form chlorophyllide a (Chlide). This reaction is light-independent. The L component serves as a unique electron donor to the NB-component of the complex, and binds Mg-ATP. The protein is Light-independent protochlorophyllide reductase iron-sulfur ATP-binding protein of Methylorubrum extorquens (strain CM4 / NCIMB 13688) (Methylobacterium extorquens).